Here is a 237-residue protein sequence, read N- to C-terminus: Ribosomal RNA small subunit methyltransferase G (237 aa).

S-adenosyl-L-methionine is bound by residues G76, F81, 128–129 (VE), and R147.

It belongs to the methyltransferase superfamily. RNA methyltransferase RsmG family.

Its subcellular location is the cytoplasm. Specifically methylates the N7 position of a guanine in 16S rRNA. This Prochlorococcus marinus (strain AS9601) protein is Ribosomal RNA small subunit methyltransferase G.